The following is a 1356-amino-acid chain: RHO1 GDP-GTP exchange protein 2 (1356 aa).

The residue at position 2 (serine 2) is an N-acetylserine. Disordered stretches follow at residues 74-94 (RRSG…EMKG) and 109-175 (EVPD…PRNE). Residue serine 76 is modified to Phosphoserine. 2 stretches are compositionally biased toward polar residues: residues 109-125 (EVPD…TPVS) and 147-157 (HIYSTSNSASR). Serine 193 bears the Phosphoserine mark. Disordered regions lie at residues 202-291 (LKKQ…RSMS), 303-362 (SFQS…SSSN), 383-409 (SVSG…VMSA), 531-571 (GNHS…SQQK), and 626-645 (NISM…TSSV). Positions 204-221 (KQSSFSTGSASTTPTQAR) are enriched in polar residues. A Phosphoserine modification is found at serine 223. Over residues 235–244 (SSKDLHEQHQ) the composition is skewed to basic and acidic residues. The segment covering 250-265 (QHNNINNHNNNNTNNN) has biased composition (low complexity). Over residues 271–281 (VGSSNSNYPQH) the composition is skewed to polar residues. The segment covering 282 to 291 (SHSISSRSMS) has biased composition (low complexity). Positions 303–325 (SFQSKTSNSRKATQKYDITSNPF) are enriched in polar residues. Basic residues predominate over residues 329-338 (HHHHHHHHSS). Low complexity-rich tracts occupy residues 339–362 (NSHS…SSSN) and 383–401 (SVSG…TPLS). Phosphoserine is present on residues serine 566 and serine 628. The DH domain occupies 659–846 (KRQEAIYEVY…RDFMKRIDQA (188 aa)). Positions 1034-1336 (TNKINSVTSC…RLLQTSTQEI (303 aa)) constitute a CNH domain.

Stimulates the exchange of RHO1 GDP-bound form into GTP-bound form. The protein is RHO1 GDP-GTP exchange protein 2 (ROM2) of Saccharomyces cerevisiae (strain ATCC 204508 / S288c) (Baker's yeast).